The sequence spans 162 residues: Caveolin-2 (162 aa).

Over 1–86 (MGLETEKADV…FEISKYVIYK (86 aa)) the chain is Cytoplasmic. At tyrosine 19 the chain carries Phosphotyrosine; by SRC. Residues serine 20 and serine 23 each carry the phosphoserine modification. Tyrosine 27 bears the Phosphotyrosine; by SRC mark. Serine 36 carries the phosphoserine modification. The segment at residues 87–107 (FLTVFLAIPLAFAAGIIFATL) is an intramembrane region (helical). The Cytoplasmic segment spans residues 108 to 162 (SCLHIWIIMPFVKTCLMVLPSVQTIWRSVTDAVIAPLCTSVGRVFSSVSLQLSRD).

The protein belongs to the caveolin family. Monomer or homodimer. Interacts with CAV1; the interaction forms a stable heterooligomeric complex that is required for targeting to lipid rafts and for caveolae formation. Tyrosine phosphorylated forms do not form heterooligomers with the Tyr-19-phosphorylated form existing as a monomer or dimer, and the Tyr-27-form as a monomer only. Interacts (tyrosine phosphorylated form) with the SH2 domain-containing proteins, RASA1, NCK1 and SRC. Interacts (tyrosine phosphorylated form) with INSR, the interaction (Tyr-27-phosphorylated form) is increased on insulin stimulation. Interacts (Tyr-19 phosphorylated form) with MAPK1 (phosphorylated form); the interaction, promoted by insulin, leads to nuclear location and MAPK1 activation. Interacts with STAT3; the interaction is increased on insulin-induced tyrosine phosphorylation leading to STAT activation. In terms of processing, phosphorylated on serine and tyrosine residues. CAV1 promotes phosphorylation on Ser-23 which then targets the complex to the plasma membrane, lipid rafts and caveolae. Phosphorylation on Ser-36 appears to modulate mitosis in endothelial cells. Phosphorylation on both Tyr-19 and Tyr-27 is required for insulin-induced 'Ser-727' phosphorylation of STAT3 and its activation. Phosphorylation on Tyr-19 is required for insulin-induced phosphorylation of MAPK1 and DNA binding of STAT3. Tyrosine phosphorylation is induced by both EGF and insulin (By. similarity).

It is found in the nucleus. The protein resides in the cytoplasm. Its subcellular location is the golgi apparatus membrane. The protein localises to the cell membrane. It localises to the membrane. It is found in the caveola. May act as a scaffolding protein within caveolar membranes. Interacts directly with G-protein alpha subunits and can functionally regulate their activity. Acts as an accessory protein in conjunction with CAV1 in targeting to lipid rafts and driving caveolae formation. The Ser-36 phosphorylated form has a role in modulating mitosis in endothelial cells. Positive regulator of cellular mitogenesis of the MAPK signaling pathway. Required for the insulin-stimulated nuclear translocation and activation of MAPK1 and STAT3, and the subsequent regulation of cell cycle progression. This chain is Caveolin-2 (CAV2), found in Carollia perspicillata (Seba's short-tailed bat).